Consider the following 203-residue polypeptide: Small ribosomal subunit protein uS4 (203 aa).

Residues 20–45 are disordered; sequence LPGLTRKRPKNTNPPGMHGAERKKKS. Residues 92–155 enclose the S4 RNA-binding domain; sequence MRLDCIVFRL…SSRKLVAAYA (64 aa).

The protein belongs to the universal ribosomal protein uS4 family. Part of the 30S ribosomal subunit. Contacts protein S5. The interaction surface between S4 and S5 is involved in control of translational fidelity.

One of the primary rRNA binding proteins, it binds directly to 16S rRNA where it nucleates assembly of the body of the 30S subunit. Its function is as follows. With S5 and S12 plays an important role in translational accuracy. This is Small ribosomal subunit protein uS4 from Synechococcus sp. (strain JA-3-3Ab) (Cyanobacteria bacterium Yellowstone A-Prime).